A 275-amino-acid chain; its full sequence is C-type lectin domain family 12 member B (275 aa).

Topologically, residues 1–41 are cytoplasmic; that stretch reads MSDEVTYATLMLQDSARVRGNQDGNNLRKEGHPAQSSLWRG. An ITIM motif motif is present at residues 5–10; that stretch reads VTYATL. Tyr-7 carries the phosphotyrosine modification. The chain crosses the membrane as a helical; Signal-anchor for type II membrane protein span at residues 42-64; the sequence is AALSLMTLCLVLVTGLVTLATMF. The Extracellular portion of the chain corresponds to 65-275; sequence LQVSNDINSD…ASLVKTEDLD (211 aa). N-linked (GlcNAc...) asparagine glycans are attached at residues Asn-91, Asn-175, and Asn-236. Positions 149–263 constitute a C-type lectin domain; it reads YGNSCYYFSI…CSAEIPWICE (115 aa). 2 cysteine pairs are disulfide-bonded: Cys-171-Cys-262 and Cys-241-Cys-254.

As to quaternary structure, homodimer. Interacts (via ITIM motif) with PTPN6. Interacts (via ITIM motif) with PTPN11; this interaction triggers dephosphorylation and activation of PTPN11.

It localises to the cell membrane. In terms of biological role, inhibitory receptor postulated to negatively regulate immune and non-immune functions. Upon phosphorylation, recruits SH2 domain-containing PTPN6 and PTPN11 phosphatases to its ITIM motif and antagonizes activation signals. Although it inhibits KLRK1/NKG2D-mediated signaling, it does not bind known ligands of KLRK1/NKG2D and therefore is not its inhibitory counterpart. May limit activation of myeloid cell subsets in response to infection or tissue inflammation. May protect target cells against natural killer cell-mediated lysis. May negatively regulate cell cycle and differentiation of melanocytes via inactivation of STAT3. The polypeptide is C-type lectin domain family 12 member B (Clec12b) (Mus musculus (Mouse)).